Reading from the N-terminus, the 99-residue chain is Prostate and testis expressed protein 4 (99 aa).

An N-terminal signal peptide occupies residues 1–23 (MNSVTKISTLLIVILSFLCFVEG). Residues 24-99 (LICNSCEKSR…CCEKNLCNSF (76 aa)) form the UPAR/Ly6 domain. 4 disulfides stabilise this stretch: cysteine 26-cysteine 52, cysteine 29-cysteine 37, cysteine 44-cysteine 70, and cysteine 74-cysteine 90.

Expressed in prostate, testis, eye, kidney and skeletal muscle. Expressed in the dorsal lobe of prostate. Not expressed in the ventral lobe of prostate.

Its subcellular location is the secreted. Functionally, enhances sperm motility. Binds to calmodulin and inhibits calcium transport into spermatozoa. May modulate the function of nicotinic acetylcholine receptors. The sequence is that of Prostate and testis expressed protein 4 (Pate4) from Mus musculus (Mouse).